Consider the following 396-residue polypeptide: Aspartic protease 1 (396 aa).

The first 15 residues, 1–15 (MQTFVLLALVAACSA), serve as a signal peptide directing secretion. Residues 68-389 (YLGNITLGTP…DIGNGQIGFA (322 aa)) form the Peptidase A1 domain. Asn71 carries N-linked (GlcNAc...) asparagine glycosylation. Residue Asp86 is part of the active site. Cys99 and Cys104 form a disulfide bridge. Asp278 is a catalytic residue. A disulfide bridge connects residues Cys313 and Cys349.

Belongs to the peptidase A1 family. As to quaternary structure, interacts with B.thuringiensis endotoxin Cry6Aa; the interaction prevents Cry6Aa proteolysis by host gut proteases.

The protein resides in the cytoplasm. It is found in the lysosome. It localises to the secreted. In terms of biological role, aspartic protease, which is part of the necrosis cell death pathway. Promotes B.thuringiensis Cry6Aa stability by preventing its proteolysis by host gut proteases. Required for Cry6Aa-induced necrotic death of intestinal cells. Cry6Aa uptake into the host intestinal cells triggers an increase in intracellular Ca(2+) levels leading to lysosome rupture and to the subsequent release of asp-1 which leads to necrosis. In Caenorhabditis elegans, this protein is Aspartic protease 1.